A 147-amino-acid chain; its full sequence is 3-hydroxyacyl-[acyl-carrier-protein] dehydratase FabZ (147 aa).

H48 is a catalytic residue.

This sequence belongs to the thioester dehydratase family. FabZ subfamily.

Its subcellular location is the cytoplasm. The enzyme catalyses a (3R)-hydroxyacyl-[ACP] = a (2E)-enoyl-[ACP] + H2O. Involved in unsaturated fatty acids biosynthesis. Catalyzes the dehydration of short chain beta-hydroxyacyl-ACPs and long chain saturated and unsaturated beta-hydroxyacyl-ACPs. This chain is 3-hydroxyacyl-[acyl-carrier-protein] dehydratase FabZ, found in Aliarcobacter butzleri (strain RM4018) (Arcobacter butzleri).